We begin with the raw amino-acid sequence, 67 residues long: Brevinin-1CDYc (67 aa).

A signal peptide spans 1 to 22 (MFTLKKSLLLIFFLGTINLSLC). Residues 23 to 45 (EEERNADEEERRDDPEERDVEVE) constitute a propeptide that is removed on maturation. A disulfide bridge links C61 with C67.

This sequence belongs to the frog skin active peptide (FSAP) family. Brevinin subfamily. Expressed by the skin glands.

The protein localises to the secreted. In terms of biological role, antimicrobial peptide. The protein is Brevinin-1CDYc of Rana huanrensis (Huanren frog).